The chain runs to 192 residues: Ion-translocating oxidoreductase complex subunit B (192 aa).

A hydrophobic region spans residues 1–26 (MNTIWIAVGALTLLGLVFGAILGYAS). The 4Fe-4S domain maps to 32 to 91 (EDDPVVEKIDAILPQSQCGQCGYPGCRPYAEAVGLQGEKINRCAPGGEAVMLKMAELLNV). Positions 49, 52, 57, 74, 117, 120, 123, 127, 147, 150, 153, and 157 each coordinate [4Fe-4S] cluster. 4Fe-4S ferredoxin-type domains are found at residues 108–137 (MLAV…GATR) and 138–167 (AMHT…LRPV).

This sequence belongs to the 4Fe4S bacterial-type ferredoxin family. RnfB subfamily. As to quaternary structure, the complex is composed of six subunits: RsxA, RsxB, RsxC, RsxD, RsxE and RsxG. [4Fe-4S] cluster serves as cofactor.

Its subcellular location is the cell inner membrane. In terms of biological role, part of a membrane-bound complex that couples electron transfer with translocation of ions across the membrane. Required to maintain the reduced state of SoxR. This is Ion-translocating oxidoreductase complex subunit B from Salmonella agona (strain SL483).